The sequence spans 72 residues: Phycobilisome 37.5 kDa linker polypeptide, phycocyanin-associated, rod (72 aa).

One can recognise a PBS-linker domain in the interval 1-72 (MTSSAAAIRL…ASGNISVREF (72 aa)).

The protein belongs to the phycobilisome linker protein family.

The protein localises to the cellular thylakoid membrane. Functionally, rod linker protein, associated with phycocyanin. Linker polypeptides determine the state of aggregation and the location of the disk-shaped phycobiliprotein units within the phycobilisome and modulate their spectroscopic properties in order to mediate a directed and optimal energy transfer. The chain is Phycobilisome 37.5 kDa linker polypeptide, phycocyanin-associated, rod (cpcH2) from Pseudanabaena tenuis (strain PCC 7409).